The chain runs to 526 residues: Inosine-5'-monophosphate dehydrogenase (526 aa).

CBS domains are found at residues Phe120 to Val179 and Met183 to Ser239. Residues Asp276–Ser278 and Gly326–Gly328 contribute to the NAD(+) site. K(+) is bound by residues Gly328 and Gly330. Residue Ser331 participates in IMP binding. Cys333 is a binding site for K(+). Catalysis depends on Cys333, which acts as the Thioimidate intermediate. IMP is bound by residues Asp366 to Gly368 and Gly389 to Ser390. The active-site Proton acceptor is the Arg439. Residue Gln451 coordinates IMP. Ser506 contacts K(+). The tract at residues Ser506–Ser526 is disordered. A compositionally biased stretch (basic and acidic residues) spans His517–Ser526.

Belongs to the IMPDH/GMPR family. In terms of assembly, homotetramer. K(+) is required as a cofactor.

It is found in the cytoplasm. The enzyme catalyses IMP + NAD(+) + H2O = XMP + NADH + H(+). It participates in secondary metabolite biosynthesis; terpenoid biosynthesis. Mycophenolic acid (MPA) is a non-competitive inhibitor that prevents formation of the closed enzyme conformation by binding to the same site as the amobile flap. In contrast, mizoribine monophosphate (MZP) is a competitive inhibitor that induces the closed conformation. MPA is a potent inhibitor of mammalian IMPDHs but a poor inhibitor of the bacterial enzymes. MZP is a more potent inhibitor of bacterial IMPDH. Functionally, catalyzes the conversion of inosine 5'-phosphate (IMP) to xanthosine 5'-phosphate (XMP), the first committed and rate-limiting step in the de novo synthesis of guanine nucleotides, and therefore plays an important role in the regulation of cell growth. Part of the gene cluster that mediates the biosynthesis of mycophenolic acid (MPA), the first isolated antibiotic natural product in the world. Does not play a role in the biosynthesis of MPA, but is involved in self resistance to MPA, since MPA acts as an inhibitor of IMP dehydrogenases. This Penicillium roqueforti (strain FM164) protein is Inosine-5'-monophosphate dehydrogenase.